The sequence spans 272 residues: Large ribosomal subunit protein uL3 (272 aa).

The interval 125–146 (QHIGPKSHGGGGGSQPLRQTGS) is disordered.

Belongs to the universal ribosomal protein uL3 family. In terms of assembly, part of the 50S ribosomal subunit. Forms a cluster with proteins L14 and L19.

One of the primary rRNA binding proteins, it binds directly near the 3'-end of the 23S rRNA, where it nucleates assembly of the 50S subunit. This is Large ribosomal subunit protein uL3 from Metamycoplasma arthritidis (strain 158L3-1) (Mycoplasma arthritidis).